A 1312-amino-acid chain; its full sequence is Probable histone-lysine N-methyltransferase lin-59 (1312 aa).

2 stretches are compositionally biased toward polar residues: residues 1–11 and 25–36; these read MHGAGEQQQRY and STSSHQYQQQGA. 5 disordered regions span residues 1 to 41, 54 to 81, 154 to 223, 312 to 435, and 524 to 556; these read MHGA…QMHQ, TTTSAAASTSSSGGSNSSGGSGGHRQQG, QPSG…KPVD, EESK…PPPV, and KDNIKKEVKEESTPPPTKLRGRLPSRRTREPSE. Residues 54–68 show a composition bias toward low complexity; that stretch reads TTTSAAASTSSSGGS. Over residues 69 to 78 the composition is skewed to gly residues; the sequence is NSSGGSGGHR. Residues 160–176 are compositionally biased toward low complexity; that stretch reads PMSSNAPATTSSATPDS. The segment covering 200 to 210 has biased composition (acidic residues); the sequence is DHDDEEDDDGP. The segment covering 312–321 has biased composition (basic and acidic residues); that stretch reads EESKKKKDME. Positions 344 to 367 are enriched in polar residues; it reads ATRSTNSPDVTTSNLPEEPSTSTM. Over residues 371 to 382 the composition is skewed to basic and acidic residues; it reads KENEDVEKVEGK. A compositionally biased stretch (basic residues) spans 383 to 394; it reads RRGRKPKKRRGF. Basic and acidic residues-rich tracts occupy residues 395 to 419 and 524 to 535; these read HKESFEDLESDAKKSKAEQHEDHLP and KDNIKKEVKEES. The AWS domain occupies 590–635; sequence APSLTCGCTKGACTSDMDCLNRALRVQCSSDCSVPYCSNRRFWKED. The SET domain occupies 638 to 750; it reads NKLCVSNGPR…PNAEITVDKS (113 aa). The segment at 913–934 is disordered; it reads DNAPRARALSTSCPSPVPSKRG. The PHD-type zinc-finger motif lies at 967 to 1027; it reads AVRCICGALD…EYICDFCTNK (61 aa). The region spanning 1100–1223 is the BAH domain; sequence NKYRFPKAAT…KTQRVFEKVP (124 aa). The interval 1248-1295 is disordered; that stretch reads RDFRPYDPSNPSPKPPKTSSIPSTSSIDPPQSSSDGLPEVDTKKLSKR. Positions 1264–1281 are enriched in low complexity; that stretch reads KTSSIPSTSSIDPPQSSS.

The protein belongs to the class V-like SAM-binding methyltransferase superfamily. Histone-lysine methyltransferase family. SET2 subfamily. As to expression, widely expressed throughout embryonic development and into adulthood.

Its subcellular location is the nucleus. The catalysed reaction is L-lysyl-[histone] + S-adenosyl-L-methionine = N(6)-methyl-L-lysyl-[histone] + S-adenosyl-L-homocysteine + H(+). Probable histone methyltransferase. Essential protein required to maintain expression of homeotic genes egl-5 and mab-5. May play an analogous role to the trithorax Group (trxG) proteins. TrxG proteins form multiprotein complexes that are required to maintain the transcriptionally active state of homeotic genes throughout development. May act via a modification of chromatin. The chain is Probable histone-lysine N-methyltransferase lin-59 (lin-59) from Caenorhabditis elegans.